The following is a 248-amino-acid chain: ATP synthase subunit a, chloroplastic (248 aa).

The next 5 helical transmembrane spans lie at 35 to 55 (GQVFIVSWLVIAALLTISFLG), 94 to 114 (VPYIATLFLFILGCNWAGALI), 133 to 153 (INTTVALSLLTSLAYFYAGLS), 202 to 222 (VFTLLIPILIPLPVMILGLFA), and 224 to 244 (SIQALIFSTLSAAYIGEAMEG).

Belongs to the ATPase A chain family. In terms of assembly, F-type ATPases have 2 components, CF(1) - the catalytic core - and CF(0) - the membrane proton channel. CF(1) has five subunits: alpha(3), beta(3), gamma(1), delta(1), epsilon(1). CF(0) has four main subunits: a, b, b' and c.

The protein resides in the plastid. It is found in the chloroplast thylakoid membrane. Its function is as follows. Key component of the proton channel; it plays a direct role in the translocation of protons across the membrane. This is ATP synthase subunit a, chloroplastic from Porphyra purpurea (Red seaweed).